Consider the following 248-residue polypeptide: Floral homeotic protein AGAMOUS (248 aa).

Residues 19 to 73 enclose the MADS-box domain; it reads RGKIEIKRIENTTNRQVTFCKRRNGLLKKAYELSVLCDAEVALIVFSSRGRLYEY. A K-box domain is found at 103 to 193; sequence AQYYQQEASK…RAKIAETERA (91 aa). The interval 196 to 219 is disordered; sequence QQQQQQMNLMPGSSSYELVPPPHQ. Positions 202-211 are enriched in polar residues; that stretch reads MNLMPGSSSY.

The protein resides in the nucleus. In terms of biological role, probable transcription factor involved in regulating genes that determines stamen and carpel development in wild-type flowers. The polypeptide is Floral homeotic protein AGAMOUS (AG1) (Nicotiana tabacum (Common tobacco)).